Here is a 584-residue protein sequence, read N- to C-terminus: Galectin-3-binding protein (584 aa).

Positions 1–18 (MTPPRLFWVWLLVAGTQG) are cleaved as a signal peptide. One can recognise an SRCR domain in the interval 24–124 (MRLADGGATN…HERDAGVVCT (101 aa)). 3 cysteine pairs are disulfide-bonded: C49/C113, C62/C123, and C93/C103. The N-linked (GlcNAc...) asparagine glycan is linked to N69. 2 N-linked (GlcNAc...) asparagine glycosylation sites follow: N125 and N192. A BTB domain is found at 153-221 (CDLSISVNVQ…FYSRRIDITL (69 aa)). The BACK domain maps to 260 to 359 (PLDLYAYAVA…MLPEELFELQ (100 aa)). Residues N361, N397, N550, and N579 are each glycosylated (N-linked (GlcNAc...) asparagine).

Homodimers and homomultimers. The multimers form ring-like structures with a diameter of 30-40 nm. Binds LGALS1 and LGALS3. Binds ITGB1, COL4A1, COL5A1, COL6A1, FN1 and NID. Interacts with the gamma-tubulin ring complex (gamma-TuRC), composed of gamma-tubulin, TUBGCP2, TUBGCP3, TUBGCP4, TUBGCP5 and TUBGCP6. The unglycosylated form interacts with PDE4DIP; this interaction, which is PDE4DIP isoform-specific, may connect a pericentrosomal complex, made of AKAP9, CDK5RAP2, EB1/MAPRE1 and PDE4DIP, to the gamma-tubulin ring complex (gamma-TuRC) to promote microtubule assembly and acetylation.

The protein resides in the secreted. Its subcellular location is the extracellular space. It localises to the extracellular matrix. In terms of biological role, promotes integrin-mediated cell adhesion. May stimulate host defense against viruses and tumor cells. The polypeptide is Galectin-3-binding protein (LGALS3BP) (Pongo abelii (Sumatran orangutan)).